A 3961-amino-acid chain; its full sequence is MTSSEPIAIIGSACRFPGGADTPSKLWELLKEPRDLLQKVPEKRRWHSEAFYHKDPEHHGTSNVSSSYFLDDDPASFDNTFFNIQPSECEAIDPQQRMLMETVYDSVCSAGQTIDGLRGSSTAVYVGMMCDDWSAILTKDAESIPQYSATGMGRSIMSNRISYFFDWHGPSITLDTACSSSLVAVHLAVQALRNGDCGTAIAAGVNLCLSPGMYIATSNLHMLSEGARSRMWDKDVDGYARGEGIASVVLKPLSAAIRDGDHIECLIRATGVNQDGKTQGLTMPSATAQTALIRQTYERAGLDIEKPEDRPQFFHAHGTGTPAGDPQEAEAISTAFYSGGLSDKLYVGSIKTVIGHTEGTAGLASLIGTSLALQHGVIPPNLLFNELNPRLIPFYNNLEVPTSAKPWPQLLPGQARRASVNSFGFGGTNAHAIVEAYEPPTSSGAADNVFAPLVFSAATEKSLRASLSAHGDYLQANPQVPLRNFAYTLQERRSTLAFRAVIPASNTTDAVERINALLDDADSVELGTKHFATPHPRLLGVFTGQGAQWPRMGAQIVEASPYASKKLGELDTALATLPPDVRPSWTLREEILADLEVSKVAEAAISQPLCTAVQILLVDLLTAAGIRFDAVVGHSSGEIGAAYAAGFISAETAIRVAYLRGFYAKLAGAAEMKGSMMAVGTSYEDALEFCQLEHFMGRISVAAVNSDSSITLSGNEDAIMEAVEIFKDEGKFARQLKVDTAYHSVHMLPCSEPYLKAMESVTQSTAPRDNTAGPRPTWYSSVLDGAVMGPGEVNSEYWVSNMVNPVLFSAAVAAAVSATGPFNLALEVGPHPALKGPCLDTLAAASGDSIPYSGLLSRSKNDILELSSALGFVWANLGASSVRFGDFEKLISGVSENPRPVKDLPKYAFDHTRSFWQISRASGAQFLAQDPPHPILGKRCLERETSQHVEWRNILSPKELPWLQGHRIQGGMVFPAAGYVAMAIEAMKIAVGKSRMSLIHIENLHIGRAMAFNQETSTMECLFRLNIVNSSPDSMKAKFSCCSGAPYETGTTMVLNAEGTVTVTLAEPEPDAIPYMKPKNFNMTEIEVDRFYTQIHKLGYEYSAPFRGMLSIQRKNAYALGTMEDQGGSDWEDQLLVHPGMLDTAIQSSSAAFGCPGDGMMWTLYIPTGIQSIIINPYYTTYATEKQEVLPWETISRGMVNTRTSMDINIFSQDNAHTFIQVEGLELVPFTAARPEDDANIFSSLEYRIDSPSGDLAVINDGWDSHSSEAAIKGERVSFFYLRRLLEEITPEEKEKTLPHYRHLLNWAAHVVARVSAGKNPCVPASCMQDTQEIIDSMWDGVRNRADIRLIESVGRNLIKVVREGSGILEHMDGLFDFYDQGLGLDRANRHLARMVGQLAHRYPHMNIFEIGAGTGGSTRNILSAIREEFSTYTYTDVSSGFFEAAQELFQDYEDRMIYSTYNMEHEPTSQGFEEGHYDLLLASNVLHATDKLEEMMLSARKLLKPGGYLIALELTNNDSMRVGLPMGTLPGWWLGAETGRPWGPTVTLPQWDSLLRKCGFGGIDTSTPIQHRLQASTIFAAQAVDDRVNLLRNPLSLVNNLPLTDAPRLVIIGGESLATHAIANNISSLLASHYSEIVRIVSFADLDLDVLPYGTAVLSLADLDEPVFKDISPAKLDALKTLWRQAFNIVWVTQGARAAEPYSSMMIGLGRAMIHEYPTISLQLMDIDTIADESRATQLIAKEFIRLELLNTFKRGTKSNLDLLWSIESEVTFEGSARLIPRLYLNKEANARYNSARRSIETQVNWKASLVTVALQGDTYGLSKPSPLRLPISQPSDTKVTSLNVSHFLLQGLKIDGLNPLVLCAGTERSTGKHLLALSHSLESQPEIQTKWSAPLPSGSDPSQIIAAVAAEIIADQITKLHTRSGIMIIHEATEQLAVALHTRAQTLGCQIVFTTSSKDHAQRGWQFIPQNISRRLIKRTLPADSNVFIDLSYSSASVAAGRLISGSVSKSCAKYTSDAFYSASVSSEFDLESSTKVEEAFQQAYDSVTQSKTGLVDPITIPIQEIGDVSVSQKPLAVVVSSATNLAVKVEAIDSGVIFRQDKTYLLIGMSGQVGQSLCQWMVKCGARHVVLTSRRPLVHDDFIESMKDLGANVRTFALDITQRESLHKCYEEIVATMPPIAGVANGAMILRDSMFDGMTFQNLTTVLEPKVAGTRYLDELFYDAPLDFFIVLSSITSLVGNSSQSNYTAANMFMVALVEQRRKRGVPGSAISISALIGIGYVENSEFTGEYFENIGLRNISEQDLHQQFAEAILAGRPETQGSSEVAIGLIPFYPERDDKAQFHTDIKFNHLMLERKDAQIHGGKGSALPVRVQLAEAKTKDQAATIIKDGFMVRLKRTLMIGLDEVVNEKVPLVEQGIDSLMAVEIRAWFLKELDVDIPVLKVLGGSNITELLQEAMDRTPSTIIDFSSLSNAKAAAPVTNTATPPPEVQVTGSASDSSRSLTPDGLSTSRPSTPVRTPMTEINDPTPSFSLLSVAPDIAPKVPESVSPMSYGQARFWFLSDYLEDKTSFNMTVMFKLTGRLQVPRLERAVRTIAHRHDALRTRFFWGGEGDKRIAMQGISAESSIELEHVRINSEADAKNELRKMHEFVWDLDSHQAARMVLLTINENEHYFMTSGHHISWDGYGFTVLFIDLDAAYRGEPLSPNGPETQYPAFAAWQRDTYAAGAMKKSIDEYYRPMIDPEARPLPLFPFARAPNRPLLDHFEQFEAKVTLQPHVVSKLKQVSRKNGATMFHLYLAALQALVFRLLPEEQSFYLGVADANRLDKNFMGSLGFFLNLLPVRFDRTAPGTKSSDMIKDTRNKAYKALENSFVPWDVLLHELKIPRTNTEAPIFQLFVDYRQIVRERAQWCGCSMSDEDWLNARNGYDLTLGITDNPTGESLLSLRFQKKLYSEESTEMFLRSYVNVLEALASGKDLLVDDLPRWAGADVEEALNVGRGPQLELEWPVTVSHRIDQMIGTYASKPALQDEHNNCMSYEQMGHRINTIAAALIQAGTTTGTPVGVFQTPSSDWICSMLAIFRVGATYIPLDLRNSVARVSFIVEIAQPLILLTDRETTLHVAEIQASNATEIIIPDLSTTTMPLSMENQARPDSPAVTLFTSGTTGRPKGVVLTHANLRAQCEGYSRMVNLQSMTSVVLQQTNYNFDVSLDQIFAALAEGGCLYVVPASKRGDPQAITKIMAEKGVTYTVATPSEYETWFRYAPETLAECKSWGYAFGGGEHLNNGLIGEFAALSTRHIPELRLFNNYGPTEASLAITKGEVDFKRPDLEKHVPAGMTIPNYAVAIVDENLKPVPLETVGEIVAGGPGVAAGYLGQADLTREKFISGHDVHRLAAQHSDRWYRTGDRGYLRPDGALFVHGRILGDTQVKIRGFRVELQEIENVVLETAKGALTHAVVSLRGTGEDKFLTAHVVFAPDFAMHLRQDLIRHLEAALPLPSYMQPTVIVPLTKVPVTTNFKIDRNAIQAMPLPQAVAGTDNLANMEGRVAALWRIIIPHLTQELTPESDFFAVGGNSILLVKLQAAIKRELQSSPQLIDLINSSSLEGMARHVRAAFINRIDWDLETAVPADLKEDLEVLTSQPRKHGQDDLTVVITGSTGYLGRHVLAHLVDSSNVRQIICLVRPEHLQTASPLSTSSKIRLVAADISQPSLGLGAQTFAELAQITDIVFHCAANRSFWDGFESLRHVNFDAAKELARLCVANDAVLHFMSSGAVSKYNDISPPTDGSDGYIASKWAAEEFLRRVAKFGLRVQVHRPLALPSEKVSSLSQEDLKRVQDELPRLIAQIGQRPEFSAIHGHIDVRPVSDVATTLVEDMLVSSVQESGNEATVKNHAAHLRLQIKTFAEQIDADEELSKLPTMDALQWFGAAKRAGFGWLIGAMEMHIEGDDQSGTTTQVLVQR.

The 433-residue stretch at 4 to 436 folds into the Ketosynthase family 3 (KS3) domain; it reads SEPIAIIGSA…GTNAHAIVEA (433 aa). Catalysis depends on for beta-ketoacyl synthase activity residues cysteine 178, histidine 317, and histidine 356. Positions 541 to 867 are malonyl-CoA:ACP transacylase (MAT) domain; it reads VFTGQGAQWP…RSKNDILELS (327 aa). The segment at 933–1068 is N-terminal hotdog fold; the sequence is HPILGKRCLE…GTVTVTLAEP (136 aa). The interval 933 to 1234 is dehydratase (DH) domain; that stretch reads HPILGKRCLE…LELVPFTAAR (302 aa). Residues 933 to 1236 form the PKS/mFAS DH domain; it reads HPILGKRCLE…LVPFTAARPE (304 aa). Histidine 966 acts as the Proton acceptor; for dehydratase activity in catalysis. The C-terminal hotdog fold stretch occupies residues 1083–1236; the sequence is MTEIEVDRFY…LVPFTAARPE (154 aa). Aspartate 1143 acts as the Proton donor; for dehydratase activity in catalysis. Residues 1376-1569 form a methyltransferase (MT) domain region; the sequence is FDFYDQGLGL…GFGGIDTSTP (194 aa). Positions 2106 to 2277 are ketoreductase (KR) domain; that stretch reads TYLLIGMSGQ…GVPGSAISIS (172 aa). Positions 2386–2464 constitute a Carrier 1 domain; sequence QAATIIKDGF…ELLQEAMDRT (79 aa). Residue serine 2424 is modified to O-(pantetheine 4'-phosphoryl)serine. The interval 2482-2527 is disordered; sequence PVTNTATPPPEVQVTGSASDSSRSLTPDGLSTSRPSTPVRTPMTEI. A compositionally biased stretch (polar residues) spans 2495 to 2520; the sequence is VTGSASDSSRSLTPDGLSTSRPSTPV. The segment at 2553-2993 is condensation (C) domain; the sequence is PMSYGQARFW…DLPRWAGADV (441 aa). The adenylation (A) (KR) domain stretch occupies residues 3019-3424; sequence QMIGTYASKP…DGALFVHGRI (406 aa). The Carrier 2 domain maps to 3542-3616; it reads ANMEGRVAAL…GMARHVRAAF (75 aa). Serine 3576 bears the O-(pantetheine 4'-phosphoryl)serine mark. Residues 3725–3871 form a reductase (RED) domain region; sequence ITDIVFHCAA…VRPVSDVATT (147 aa).

It in the C-terminal section; belongs to the NRP synthetase family.

Its pathway is secondary metabolite biosynthesis. Hybrid PKS-NRPS synthetase; part of the gene cluster that mediates the biosynthesis of the trans-fused decalin-containing tetramic acid phomasetin, the stereochemical opposite of the HIV-1 integrase inhibitor equisetin. The PKS module of phm1 together with the enoylreductase phm4 catalyze the formation of the polyketide unit which is then conjugated to L-serine by the condensation domain of the phm1 NRPS module. Activity of the Dieckmann cyclase domain (RED) of phm1 results in release of the Dieckmann product intermediate. The Diels-Alderase phm7 then uses the Dieckmann product of phm1 as substrate and catalyzes the Diels-Alder cycloaddition to form the decalin ring of N-desmethylphomasetin. N-desmethylphomasetin is further methylated to phomasetin by the methyltransferase phm5. The sequence is that of Hybrid PKS-NRPS synthetase phm1 from Pyrenochaetopsis sp.